A 186-amino-acid polypeptide reads, in one-letter code: Elongation factor P (186 aa).

Belongs to the elongation factor P family.

The protein resides in the cytoplasm. The protein operates within protein biosynthesis; polypeptide chain elongation. Involved in peptide bond synthesis. Stimulates efficient translation and peptide-bond synthesis on native or reconstituted 70S ribosomes in vitro. Probably functions indirectly by altering the affinity of the ribosome for aminoacyl-tRNA, thus increasing their reactivity as acceptors for peptidyl transferase. This chain is Elongation factor P, found in Elusimicrobium minutum (strain Pei191).